A 342-amino-acid chain; its full sequence is Ribosomal RNA small subunit methyltransferase C (342 aa).

The protein belongs to the methyltransferase superfamily. RsmC family. As to quaternary structure, monomer.

The protein localises to the cytoplasm. It catalyses the reaction guanosine(1207) in 16S rRNA + S-adenosyl-L-methionine = N(2)-methylguanosine(1207) in 16S rRNA + S-adenosyl-L-homocysteine + H(+). Specifically methylates the guanine in position 1207 of 16S rRNA in the 30S particle. This chain is Ribosomal RNA small subunit methyltransferase C, found in Shewanella piezotolerans (strain WP3 / JCM 13877).